The following is a 121-amino-acid chain: Large ribosomal subunit protein bL12 (121 aa).

The protein belongs to the bacterial ribosomal protein bL12 family. As to quaternary structure, homodimer. Part of the ribosomal stalk of the 50S ribosomal subunit. Forms a multimeric L10(L12)X complex, where L10 forms an elongated spine to which 2 to 4 L12 dimers bind in a sequential fashion. Binds GTP-bound translation factors.

Forms part of the ribosomal stalk which helps the ribosome interact with GTP-bound translation factors. Is thus essential for accurate translation. The chain is Large ribosomal subunit protein bL12 from Clostridioides difficile (strain 630) (Peptoclostridium difficile).